The chain runs to 413 residues: L-cysteine:1D-myo-inositol 2-amino-2-deoxy-alpha-D-glucopyranoside ligase (413 aa).

Residue C43 participates in Zn(2+) binding. Residues 43–46 (CGIT), T58, and 81–83 (NIT) each bind L-cysteinyl-5'-AMP. The 'HIGH' region motif lies at 45–55 (ITPYDATHLGH). The 'ERGGDP' region motif lies at 187–192 (ERGGDP). W227 serves as a coordination point for L-cysteinyl-5'-AMP. C231 is a Zn(2+) binding site. L-cysteinyl-5'-AMP is bound at residue 249 to 251 (GND). H256 serves as a coordination point for Zn(2+). L-cysteinyl-5'-AMP is bound at residue V283. The 'KMSKS' region signature appears at 289–293 (KMSKS).

This sequence belongs to the class-I aminoacyl-tRNA synthetase family. MshC subfamily. In terms of assembly, monomer. It depends on Zn(2+) as a cofactor.

It catalyses the reaction 1D-myo-inositol 2-amino-2-deoxy-alpha-D-glucopyranoside + L-cysteine + ATP = 1D-myo-inositol 2-(L-cysteinylamino)-2-deoxy-alpha-D-glucopyranoside + AMP + diphosphate + H(+). Its function is as follows. Catalyzes the ATP-dependent condensation of GlcN-Ins and L-cysteine to form L-Cys-GlcN-Ins. The polypeptide is L-cysteine:1D-myo-inositol 2-amino-2-deoxy-alpha-D-glucopyranoside ligase (Gordonia bronchialis (strain ATCC 25592 / DSM 43247 / BCRC 13721 / JCM 3198 / KCTC 3076 / NBRC 16047 / NCTC 10667) (Rhodococcus bronchialis)).